The chain runs to 523 residues: MKKILLMLLCVSVLGCSKNSVESEKPVDVLLIGGGIMSATLGTYLNELEPGWTIEMVERLDKVAEESSNGWNNAGTGHSAFCELNYTSEAADGSMDISKAVAINENFEISKQFWAYQVDRKVLNDPKSFINNVPHMSFVWGDDNVAFLKKRHAALQHSSLFRGMEYSEDPEQIKQWVPLVMEGREPGQKIAATRMSIGTDVNFGEITRQLVGSLSAKDTFKLRLQHEVRDLKRNDDNTWTVTMADLANGDKETSVKARFVFIGAGGGALKLLQMSGIPEAEGYAGFPVGGSFLATTNPDVVKRHLAKVYGKASVGSPPMSVPHLDTRMIDGKPVLLFGPFATFSTKFLKNGSLWDLPGSVTSGNIGPMFNAGIDNFDLSQYLIGQLMLSQDDRMASLREYFPEARDEDWKLVQAGQRVQIIKKDAEKGGVLQFGTEVVTAADGSVAALLGASPGASTAAPIMLSVLEKAFKDKVATPEWQARLKEIVPSYGRKLNNDIELTNSTRAWSSERLQLIHVPVQPEA.

Belongs to the MQO family. FAD serves as cofactor.

It carries out the reaction (S)-malate + a quinone = a quinol + oxaloacetate. It participates in carbohydrate metabolism; tricarboxylic acid cycle; oxaloacetate from (S)-malate (quinone route): step 1/1. This Pseudomonas aeruginosa (strain ATCC 15692 / DSM 22644 / CIP 104116 / JCM 14847 / LMG 12228 / 1C / PRS 101 / PAO1) protein is Probable malate:quinone oxidoreductase 1.